Consider the following 308-residue polypeptide: Staphylococcal superantigen-like 4 (308 aa).

The signal sequence occupies residues 1-30 (MKITTIAKTSLALGLLTTGVITTTTQAANA). Positions 32–117 (TLSSTKVEAP…TTKQVPTEIN (86 aa)) are disordered. Composition is skewed to polar residues over residues 33 to 47 (LSST…TPPS) and 55 to 76 (SKPN…TANA). Residues 77-93 (TTPPSTKVTTPPSTNTP) show a composition bias toward low complexity. A compositionally biased stretch (polar residues) spans 94-114 (QPMQSTKSDTPQSPTTKQVPT). Positions 180 to 278 (VDVFVVLEEN…VIKMKNGGKY (99 aa)) are sialyl Lewis X-binding.

It belongs to the staphylococcal/streptococcal toxin family.

The protein resides in the secreted. Its function is as follows. Secreted protein that plays a role in immune innate response inhibition by interfering with host TLR2-mediated pathway. The polypeptide is Staphylococcal superantigen-like 4 (Staphylococcus aureus (strain NCTC 8325 / PS 47)).